The following is a 540-amino-acid chain: Chaperonin GroEL 2 (540 aa).

ATP contacts are provided by residues 30-33 (TLGP), Lys51, 87-91 (DGTTT), Gly415, 480-482 (NAL), and Asp496.

Belongs to the chaperonin (HSP60) family. As to quaternary structure, forms a cylinder of 14 subunits composed of two heptameric rings stacked back-to-back. Interacts with the co-chaperonin GroES.

The protein localises to the cytoplasm. It catalyses the reaction ATP + H2O + a folded polypeptide = ADP + phosphate + an unfolded polypeptide.. In terms of biological role, together with its co-chaperonin GroES, plays an essential role in assisting protein folding. The GroEL-GroES system forms a nano-cage that allows encapsulation of the non-native substrate proteins and provides a physical environment optimized to promote and accelerate protein folding. The sequence is that of Chaperonin GroEL 2 from Protochlamydia amoebophila (strain UWE25).